The chain runs to 527 residues: Putative adhesin P1-like protein MPN_500 (527 aa).

4 disordered regions span residues 1 to 26 (MDDITAPQTSAGSSSGTSTNTSGSRS), 76 to 148 (GWRN…LTNY), 248 to 269 (ASGSGSNTTSSPGIGFKIPEQS), and 468 to 527 (FGTD…VSGH). Positions 9 to 26 (TSAGSSSGTSTNTSGSRS) are enriched in low complexity. Polar residues predominate over residues 82–95 (TTSGSTGNANDTKF). Positions 108–117 (SSGTNTSAGN) are enriched in low complexity. A compositionally biased stretch (polar residues) spans 128–148 (QNGQVKTSVQEATSGDNLTNY). The segment covering 248–262 (ASGSGSNTTSSPGIG) has biased composition (low complexity). Residues 468–495 (FGTDHSTQPQPQSLKTTTPVFGRSSGNL) show a composition bias toward polar residues. The span at 500–513 (SGGGAGGGSSGSGQ) shows a compositional bias: gly residues.

This sequence belongs to the adhesin P1 family.

The protein is Putative adhesin P1-like protein MPN_500 of Mycoplasma pneumoniae (strain ATCC 29342 / M129 / Subtype 1) (Mycoplasmoides pneumoniae).